The following is a 364-amino-acid chain: Adenine deaminase (364 aa).

Zn(2+) contacts are provided by histidine 25, histidine 27, and histidine 221. Glutamate 224 serves as the catalytic Proton donor. Aspartate 301 lines the Zn(2+) pocket. Residue aspartate 302 coordinates substrate.

The protein belongs to the metallo-dependent hydrolases superfamily. Adenosine and AMP deaminases family. Adenine deaminase type 2 subfamily. The cofactor is Zn(2+).

The protein resides in the cytoplasm. The protein localises to the nucleus. The enzyme catalyses adenine + H2O + H(+) = hypoxanthine + NH4(+). In terms of biological role, catalyzes the hydrolytic deamination of adenine to hypoxanthine. Plays an important role in the purine salvage pathway and in nitrogen catabolism. Has no activity with adenosine as a substrate. In Emericella nidulans (strain FGSC A4 / ATCC 38163 / CBS 112.46 / NRRL 194 / M139) (Aspergillus nidulans), this protein is Adenine deaminase (aah1).